We begin with the raw amino-acid sequence, 210 residues long: NAD(P)H-quinone oxidoreductase subunit I (210 aa).

4Fe-4S ferredoxin-type domains lie at 55 to 84 (GRIH…VDWV) and 95 to 124 (RNYS…MTEE). Residues cysteine 64, cysteine 67, cysteine 70, cysteine 74, cysteine 104, cysteine 107, cysteine 110, and cysteine 114 each coordinate [4Fe-4S] cluster.

The protein belongs to the complex I 23 kDa subunit family. NDH-1 is composed of at least 11 different subunits. Requires [4Fe-4S] cluster as cofactor.

It is found in the cellular thylakoid membrane. The enzyme catalyses a plastoquinone + NADH + (n+1) H(+)(in) = a plastoquinol + NAD(+) + n H(+)(out). It carries out the reaction a plastoquinone + NADPH + (n+1) H(+)(in) = a plastoquinol + NADP(+) + n H(+)(out). Its function is as follows. NDH-1 shuttles electrons from an unknown electron donor, via FMN and iron-sulfur (Fe-S) centers, to quinones in the respiratory and/or the photosynthetic chain. The immediate electron acceptor for the enzyme in this species is believed to be plastoquinone. Couples the redox reaction to proton translocation, and thus conserves the redox energy in a proton gradient. This chain is NAD(P)H-quinone oxidoreductase subunit I, found in Synechococcus sp. (strain CC9902).